The primary structure comprises 461 residues: Coronin-1A (461 aa).

At Ser-2 the chain carries N-acetylserine. Ser-2 carries the post-translational modification Phosphoserine; by PKC. WD repeat units lie at residues 13–63 (HVFG…LVLP), 73–110 (NVPM…MVWE), 123–160 (PVVT…LVWD), 164–204 (GVAV…RIIE), 207–251 (KGTI…ALWD), 258–296 (PLSL…RYFE), and 302–349 (PFLH…EPIA). Residues 404–418 (LRVNRGLDTGRKRTT) show a composition bias toward basic and acidic residues. The interval 404-429 (LRVNRGLDTGRKRTTPEASGAPSSDA) is disordered. Residue Thr-412 is modified to Phosphothreonine; by PKC. A Phosphothreonine modification is found at Thr-418. Ser-422 is modified (phosphoserine). A coiled-coil region spans residues 424–460 (APSSDAISRLEEEMRKLQATVQELQKRLDRLEETVQA). Position 449 is an N6-acetyllysine (Lys-449).

Belongs to the WD repeat coronin family. Binds actin. Post-translationally, phosphorylation at Thr-412 by PKC strongly down-regulates the association with actin. In terms of processing, polyubiquitinated by RNF128 with 'Lys-48'-linked chains, leading to proteasomal degradation. As to expression, expressed in brain, thymus, spleen, bone marrow and lymph node. Low in lung and gut.

The protein localises to the cytoplasm. It is found in the cytoskeleton. The protein resides in the cell cortex. Its subcellular location is the cytoplasmic vesicle. It localises to the phagosome membrane. Its function is as follows. May be a crucial component of the cytoskeleton of highly motile cells, functioning both in the invagination of large pieces of plasma membrane, as well as in forming protrusions of the plasma membrane involved in cell locomotion. In mycobacteria-infected macrophages, its retention on the phagosomal membrane prevents fusion between phagosomes and lysosomes. The chain is Coronin-1A (CORO1A) from Bos taurus (Bovine).